The chain runs to 424 residues: Elongation factor Tu, mitochondrial (424 aa).

One can recognise a tr-type G domain in the interval 36-234 (KPHVNVGTIG…VLDTKIPLPH (199 aa)). The tract at residues 45-52 (GHVDHGKT) is G1. Position 45–52 (45–52 (GHVDHGKT)) interacts with GTP. The interval 86–90 (GITIT) is G2. The tract at residues 107–110 (DCPG) is G3. GTP contacts are provided by residues 107 to 111 (DCPGH) and 162 to 165 (NKMD). Positions 162-165 (NKMD) are G4. The tract at residues 199–201 (AAA) is G5.

It belongs to the TRAFAC class translation factor GTPase superfamily. Classic translation factor GTPase family. EF-Tu/EF-1A subfamily.

It is found in the mitochondrion. Functionally, this protein promotes the GTP-dependent binding of aminoacyl-tRNA to the A-site of ribosomes during protein biosynthesis. The sequence is that of Elongation factor Tu, mitochondrial (tufm) from Dictyostelium discoideum (Social amoeba).